The sequence spans 95 residues: Ferredoxin-like protein FixX (95 aa).

Belongs to the bacterial-type ferredoxin family. FixX subfamily.

In terms of biological role, could be part of an electron transfer system required for anaerobic carnitine reduction. Could be a 3Fe-4S cluster-containing protein. In Shigella flexneri, this protein is Ferredoxin-like protein FixX (fixX).